A 247-amino-acid polypeptide reads, in one-letter code: Adenosylcobinamide-GDP ribazoletransferase (247 aa).

5 helical membrane-spanning segments follow: residues 34-54 (IITFPLIGLLLGAISGLVFMV), 59-79 (CGVPLAALFSVLVLALMTGGF), 113-133 (GGLALIFVVLAKILVLSELAL), 138-158 (ILASLAAACAVSRGIAALLMY), and 194-214 (VLLPGMHGVAAMVVTMVAIFI).

Belongs to the CobS family. It depends on Mg(2+) as a cofactor.

It is found in the cell inner membrane. It carries out the reaction alpha-ribazole + adenosylcob(III)inamide-GDP = adenosylcob(III)alamin + GMP + H(+). It catalyses the reaction alpha-ribazole 5'-phosphate + adenosylcob(III)inamide-GDP = adenosylcob(III)alamin 5'-phosphate + GMP + H(+). The protein operates within cofactor biosynthesis; adenosylcobalamin biosynthesis; adenosylcobalamin from cob(II)yrinate a,c-diamide: step 7/7. Functionally, joins adenosylcobinamide-GDP and alpha-ribazole to generate adenosylcobalamin (Ado-cobalamin). Also synthesizes adenosylcobalamin 5'-phosphate from adenosylcobinamide-GDP and alpha-ribazole 5'-phosphate. The protein is Adenosylcobinamide-GDP ribazoletransferase of Shigella dysenteriae serotype 1 (strain Sd197).